Here is a 208-residue protein sequence, read N- to C-terminus: Uracil phosphoribosyltransferase (208 aa).

5-phospho-alpha-D-ribose 1-diphosphate is bound by residues Arg78, Arg103, and 130–138 (DPMLATGGS). Residues Ile193 and 198-200 (GDA) each bind uracil. 5-phospho-alpha-D-ribose 1-diphosphate is bound at residue Asp199.

It belongs to the UPRTase family. It depends on Mg(2+) as a cofactor.

The catalysed reaction is UMP + diphosphate = 5-phospho-alpha-D-ribose 1-diphosphate + uracil. It participates in pyrimidine metabolism; UMP biosynthesis via salvage pathway; UMP from uracil: step 1/1. Its activity is regulated as follows. Allosterically activated by GTP. In terms of biological role, catalyzes the conversion of uracil and 5-phospho-alpha-D-ribose 1-diphosphate (PRPP) to UMP and diphosphate. The protein is Uracil phosphoribosyltransferase of Aliivibrio salmonicida (strain LFI1238) (Vibrio salmonicida (strain LFI1238)).